A 160-amino-acid chain; its full sequence is MMERFEKIEMKIPAKAEYVAIIRLTMAGVANRMGFAYDDIEDMKIAISEACTNIVQHAYKEDVGEIAIVFGLYENRLEIMVADNGVSFDFNNLKRKVGPYDISKPVEHLPENGLGLYLINTLMDDIQIMHDEGMTVLMTKYIQREQVENDGNPISTYESY.

This sequence belongs to the anti-sigma-factor family.

It carries out the reaction L-seryl-[protein] + ATP = O-phospho-L-seryl-[protein] + ADP + H(+). The catalysed reaction is L-threonyl-[protein] + ATP = O-phospho-L-threonyl-[protein] + ADP + H(+). Negative regulator of sigma-B activity. Phosphorylates and inactivates its specific antagonist protein, RsbV. Upon phosphorylation of RsbV, RsbW is released and binds to sigma-B, thereby blocking its ability to form an RNA polymerase holoenzyme (E-sigma-B). The protein is Serine-protein kinase RsbW of Bacillus thuringiensis (strain Al Hakam).